The primary structure comprises 828 residues: Periplasmic nitrate reductase (828 aa).

Residues 1–32 constitute a signal peptide (tat-type signal); sequence MNLSRRDFMKTNAAVAAAAVAGLAIPVKNVEA. The region spanning 38-94 is the 4Fe-4S Mo/W bis-MGD-type domain; the sequence is IKWDKAPCRFCGTGCSVLVGTQNGRVVASQGDPDADVNRGLNCIKGYFLPKIMYGKD. Residues C45, C48, C52, and C80 each coordinate [4Fe-4S] cluster. Residues K82, Q149, N174, C178, 211 to 218, 242 to 246, 261 to 263, M372, Q376, N482, 508 to 509, K531, D558, and 718 to 727 contribute to the Mo-bis(molybdopterin guanine dinucleotide) site; these read WGSNMAEM, STFEH, QSD, SD, and TGRVLEHWHT. Residue F794 participates in substrate binding. Positions 802 and 819 each coordinate Mo-bis(molybdopterin guanine dinucleotide).

Belongs to the prokaryotic molybdopterin-containing oxidoreductase family. NasA/NapA/NarB subfamily. As to quaternary structure, component of the periplasmic nitrate reductase NapAB complex composed of NapA and NapB. Requires [4Fe-4S] cluster as cofactor. The cofactor is Mo-bis(molybdopterin guanine dinucleotide). In terms of processing, predicted to be exported by the Tat system. The position of the signal peptide cleavage has not been experimentally proven.

The protein resides in the periplasm. It catalyses the reaction 2 Fe(II)-[cytochrome] + nitrate + 2 H(+) = 2 Fe(III)-[cytochrome] + nitrite + H2O. In terms of biological role, catalytic subunit of the periplasmic nitrate reductase complex NapAB. Receives electrons from NapB and catalyzes the reduction of nitrate to nitrite. In Pasteurella multocida (strain Pm70), this protein is Periplasmic nitrate reductase.